Here is a 429-residue protein sequence, read N- to C-terminus: Ribosomal RNA small subunit methyltransferase B (429 aa).

Residues 254–260, Asp277, Asp303, and Asp322 each bind S-adenosyl-L-methionine; that span reads CAGPGGK. Catalysis depends on Cys375, which acts as the Nucleophile.

This sequence belongs to the class I-like SAM-binding methyltransferase superfamily. RsmB/NOP family.

Its subcellular location is the cytoplasm. The catalysed reaction is cytidine(967) in 16S rRNA + S-adenosyl-L-methionine = 5-methylcytidine(967) in 16S rRNA + S-adenosyl-L-homocysteine + H(+). Specifically methylates the cytosine at position 967 (m5C967) of 16S rRNA. This is Ribosomal RNA small subunit methyltransferase B from Escherichia coli O6:K15:H31 (strain 536 / UPEC).